A 272-amino-acid chain; its full sequence is Phosphoribosylformylglycinamidine synthase subunit PurQ (272 aa).

The region spanning 8-243 (VLVMSGYGIN…SEPEYQLKKE (236 aa)) is the Glutamine amidotransferase type-1 domain. Catalysis depends on C98, which acts as the Nucleophile. Catalysis depends on residues H225, E227, and E235.

Part of the FGAM synthase complex composed of 1 PurL, 1 PurQ and 2 PurS subunits.

The protein localises to the cytoplasm. The catalysed reaction is N(2)-formyl-N(1)-(5-phospho-beta-D-ribosyl)glycinamide + L-glutamine + ATP + H2O = 2-formamido-N(1)-(5-O-phospho-beta-D-ribosyl)acetamidine + L-glutamate + ADP + phosphate + H(+). The enzyme catalyses L-glutamine + H2O = L-glutamate + NH4(+). It participates in purine metabolism; IMP biosynthesis via de novo pathway; 5-amino-1-(5-phospho-D-ribosyl)imidazole from N(2)-formyl-N(1)-(5-phospho-D-ribosyl)glycinamide: step 1/2. Part of the phosphoribosylformylglycinamidine synthase complex involved in the purines biosynthetic pathway. Catalyzes the ATP-dependent conversion of formylglycinamide ribonucleotide (FGAR) and glutamine to yield formylglycinamidine ribonucleotide (FGAM) and glutamate. The FGAM synthase complex is composed of three subunits. PurQ produces an ammonia molecule by converting glutamine to glutamate. PurL transfers the ammonia molecule to FGAR to form FGAM in an ATP-dependent manner. PurS interacts with PurQ and PurL and is thought to assist in the transfer of the ammonia molecule from PurQ to PurL. This chain is Phosphoribosylformylglycinamidine synthase subunit PurQ, found in Methanococcus maripaludis (strain C7 / ATCC BAA-1331).